The primary structure comprises 572 residues: Secreted triacylglycerol lipase LIP6 (572 aa).

The signal sequence occupies residues 1–23; sequence MYSTSLLRWLVVALVSAVPLVTA. Residues cysteine 117 and cysteine 291 are joined by a disulfide bond. The active-site Nucleophile is the serine 202. Aspartate 351 is an active-site residue. Asparagine 360 is a glycosylation site (N-linked (GlcNAc...) asparagine). The active site involves histidine 385. Positions 468–572 are disordered; sequence KGGVWNDVLK…SSRRHVARFM (105 aa). Residues 491–511 are compositionally biased toward basic and acidic residues; sequence PESKKATKKYKSESKAEKKQP. Low complexity predominate over residues 512-525; sequence DSIPSSSSKSSSDN. An N-linked (GlcNAc...) asparagine glycan is attached at asparagine 525. Basic residues predominate over residues 528 to 540; it reads AHAKYHAHGHGHG. Over residues 541-562 the composition is skewed to low complexity; that stretch reads HASSNSNNGHSHSAKESSTSKG. The span at 563–572 shows a compositional bias: basic residues; the sequence is SSRRHVARFM.

It belongs to the AB hydrolase superfamily. Lipase family. Class Lip subfamily.

The protein localises to the secreted. Its subcellular location is the cell wall. It catalyses the reaction a triacylglycerol + H2O = a diacylglycerol + a fatty acid + H(+). The catalysed reaction is a monoacylglycerol + H2O = glycerol + a fatty acid + H(+). It carries out the reaction a diacylglycerol + H2O = a monoacylglycerol + a fatty acid + H(+). Its function is as follows. Secreted lipase involved in Dandruff and seborrheic dermatitis (D/SD) probably via lipase-mediated breakdown of sebaceous lipids and release of irritating free fatty acids. Shows only minimal activity against triolein. Mostly converts monoolein to di- and triolein, while free fatty acids are only produced in low amounts. This Malassezia globosa (strain ATCC MYA-4612 / CBS 7966) (Dandruff-associated fungus) protein is Secreted triacylglycerol lipase LIP6.